We begin with the raw amino-acid sequence, 504 residues long: Maturase K (504 aa).

It belongs to the intron maturase 2 family. MatK subfamily.

It is found in the plastid. Its subcellular location is the chloroplast. Functionally, usually encoded in the trnK tRNA gene intron. Probably assists in splicing its own and other chloroplast group II introns. This chain is Maturase K, found in Quercus gemelliflora (Pasang hiris).